A 179-amino-acid chain; its full sequence is Peptidyl-prolyl cis-trans isomerase A (179 aa).

In terms of domain architecture, PPIase cyclophilin-type spans 15 to 178; that stretch reads FFDITIGGVE…KPVVIANCGQ (164 aa).

This sequence belongs to the cyclophilin-type PPIase family.

It is found in the cytoplasm. It localises to the cytosol. The enzyme catalyses [protein]-peptidylproline (omega=180) = [protein]-peptidylproline (omega=0). Its activity is regulated as follows. Binds cyclosporin A (CsA). CsA mediates some of its effects via an inhibitory action on PPIase. PPIase that catalyzes the cis-trans isomerization of proline imidic peptide bonds in oligopeptides and may therefore assist protein folding. The chain is Peptidyl-prolyl cis-trans isomerase A (ppiA) from Dictyostelium discoideum (Social amoeba).